Here is a 273-residue protein sequence, read N- to C-terminus: Petrobactin import ATP-binding protein FpuD (273 aa).

Residues L5–E241 form the ABC transporter domain. Residue G37–S44 coordinates ATP.

It belongs to the ABC transporter superfamily. In terms of assembly, the complex is composed of two ATP-binding proteins (FpuD), two transmembrane proteins (FpuB) and a solute-binding protein (FpuA).

Its subcellular location is the cell membrane. The enzyme catalyses a Fe(III)-siderophore(out) + ATP + H2O = a Fe(III)-siderophore(in) + ADP + phosphate + H(+). Its function is as follows. Part of an ABC transporter complex involved in ferric-petrobactin uptake. Probably responsible for energy coupling to the transport system. The chain is Petrobactin import ATP-binding protein FpuD from Bacillus anthracis.